The sequence spans 821 residues: MSGNIGANPVIIIGCASAYAVEFNKDLIEAEDRENVNLSQFETDGQLPVGKYSLSTLINNKRTPIHLDLQWVLIDNQTAVCVTPEQLTLLGFTDEFIEKTQQNLIDGCYPIEKEKQITTYLDKGKMQLSISAPQAWLKYKDANWTPPELWNHGIAGAFLDYNLYASHYAPHQGDNSQNISSYGQAGVNLGAWRLRTDYQYDQSFNNGKSQATNLDFPRIYLFRPIPAMNAKLTIGQYDTESSIFDSFHFSGISLKSDENMLPPDLRGYAPQITGVAQTNAKVTVSQNNRIIYQENVPPGPFAITNLFNTLQGQLDVKVEEEDGRVTQWQVASNSIPYLTRKGQIRYTTAMGKPTSVGGDSLQQPFFWTGEFSWGWLNNVSLYGGSVLTNRDYQSLAAGVGFNLNSLGSLSFDVTRSDAQLHNQDKETGYSYRANYSKRFESTGSQLTFAGYRFSDKNFVTMNEYINDTNHYTNYQNEKESYIVTFNQYLESLRLNTYVSLARNTYWDASSNVNYSLSLSRDFDIGPLKNVSTSLTFSRINWEEDNQDQLYLNISIPWGTSRTLSYGMQRNQDNEISHTASWYDSSDRNNSWSVSASGDNDEFKDMKASLRASYQHNTENGRLYLSGTSQRDSYYSLNASWNGSFTATRHGAAFHDYSGSADSRFMIDADGTEDIPLNNKRAVTNRYGIGVIPSVSSYITTSLSVDTRNLPENVDIENSVITTTLTEGAIGYAKLDTRKGYQIIGVIRLADGSHPPLGISVKDETSHKELGLVADGGFVYLNGIQDDNKLALRWGDKSCFIQPPNSSNLTTGTAILPCISQN.

A signal peptide spans 1 to 20 (MSGNIGANPVIIIGCASAYA). A disulfide bridge connects residues C798 and C817.

It belongs to the fimbrial export usher family.

It localises to the cell outer membrane. In terms of biological role, may be involved in H(2) production during fermentative growth. Involved in the export and assembly of a fimbrial subunit across the outer membrane. The polypeptide is Putative outer membrane usher protein YqiG (yqiG) (Escherichia coli (strain K12)).